The sequence spans 504 residues: Protein anon-37Cs (504 aa).

Low levels seen in adult heads, thorax, abdomen and ovaries, high levels in testes.

It localises to the cytoplasm. Its function is as follows. Has a non-vital function. This chain is Protein anon-37Cs (anon-37Cs), found in Drosophila melanogaster (Fruit fly).